The following is a 433-amino-acid chain: Protein arginine N-methyltransferase 2 (433 aa).

The disordered stretch occupies residues 1-20 (MATSGDCPRSESQGEEPAEC). 2 interaction with ESR1 regions span residues 1–277 (MATS…SALK) and 133–275 (KESL…NLSA). One can recognise an SH3 domain in the interval 30–89 (VQPEEFVAIADYAATDETQLSFLRGEKILILRQTTADWWWGERAGCCGYIPANHVGKHVD). An asymmetric dimethylarginine mark is found at R61 and R72. An interaction with RB1 region spans residues 83–207 (HVGKHVDEYD…DVVLPEKVDV (125 aa)). Residues 99–432 (DEEYFGSYGT…KVGEKVFPIW (334 aa)) form the SAM-dependent MTase PRMT-type domain. H112, R121, G145, E168, and E197 together coordinate S-adenosyl-L-methionine. Catalysis depends on residues E211 and E220.

Belongs to the class I-like SAM-binding methyltransferase superfamily. Protein arginine N-methyltransferase family. As to quaternary structure, self-associates. Interacts with RB1 and E2F1. Interacts with NCOA6 coactivator. Interacts (via SH3 domain) with PRMT8. Interacts with AR. Interacts with NFKBIA. Interacts with ESR1, ESR2, PGR, PPARG, RARA, RXRA and THRB. Interacts with HNRNPUL1. Widely expressed. Highly expressed in androgen target organs such as heart, prostate, skeletal muscle, ovary and spinal cord.

Its subcellular location is the cytoplasm. The protein localises to the nucleus. The protein resides in the nucleolus. It catalyses the reaction L-arginyl-[protein] + 2 S-adenosyl-L-methionine = N(omega),N(omega)-dimethyl-L-arginyl-[protein] + 2 S-adenosyl-L-homocysteine + 2 H(+). Its function is as follows. Arginine methyltransferase that methylates the guanidino nitrogens of arginyl residues in proteins such as STAT3, FBL, histone H4. Acts as a coactivator (with NCOA2) of the androgen receptor (AR)-mediated transactivation. Acts as a coactivator (with estrogen) of estrogen receptor (ER)-mediated transactivation. Enhances PGR, PPARG, RARA-mediated transactivation. May inhibit NF-kappa-B transcription and promote apoptosis. Represses E2F1 transcriptional activity (in a RB1-dependent manner). May be involved in growth regulation. This Homo sapiens (Human) protein is Protein arginine N-methyltransferase 2 (PRMT2).